The chain runs to 577 residues: DNA primase (577 aa).

A CHC2-type zinc finger spans residues C40–C64. The region spanning V255–P337 is the Toprim domain. Mg(2+) contacts are provided by E261, D305, and D307.

The protein belongs to the DnaG primase family. In terms of assembly, monomer. Interacts with DnaB. It depends on Zn(2+) as a cofactor. Mg(2+) serves as cofactor.

The catalysed reaction is ssDNA + n NTP = ssDNA/pppN(pN)n-1 hybrid + (n-1) diphosphate.. Functionally, RNA polymerase that catalyzes the synthesis of short RNA molecules used as primers for DNA polymerase during DNA replication. In Buchnera aphidicola subsp. Acyrthosiphon pisum (strain APS) (Acyrthosiphon pisum symbiotic bacterium), this protein is DNA primase.